The chain runs to 616 residues: Chaperone protein HscA (616 aa).

It belongs to the heat shock protein 70 family.

Its function is as follows. Chaperone involved in the maturation of iron-sulfur cluster-containing proteins. Has a low intrinsic ATPase activity which is markedly stimulated by HscB. Involved in the maturation of IscU. The protein is Chaperone protein HscA of Klebsiella pneumoniae (strain 342).